A 336-amino-acid polypeptide reads, in one-letter code: Glyceraldehyde-3-phosphate dehydrogenase 1 (336 aa).

Residues 13-14 (RI) and D35 each bind NAD(+). Residue S59 is modified to Phosphoserine. Residue R80 participates in NAD(+) binding. The residue at position 125 (S125) is a Phosphoserine. D-glyceraldehyde 3-phosphate-binding positions include 151–153 (SCT), T182, 211–212 (TG), and R234. Residue C152 is the Nucleophile of the active site. Residue N316 participates in NAD(+) binding.

This sequence belongs to the glyceraldehyde-3-phosphate dehydrogenase family. As to quaternary structure, homotetramer.

The protein localises to the cytoplasm. It catalyses the reaction D-glyceraldehyde 3-phosphate + phosphate + NAD(+) = (2R)-3-phospho-glyceroyl phosphate + NADH + H(+). It functions in the pathway carbohydrate degradation; glycolysis; pyruvate from D-glyceraldehyde 3-phosphate: step 1/5. The chain is Glyceraldehyde-3-phosphate dehydrogenase 1 (tdh1) from Schizosaccharomyces pombe (strain 972 / ATCC 24843) (Fission yeast).